A 1469-amino-acid chain; its full sequence is ATP-binding cassette transporter abc4 (1469 aa).

The next 8 helical transmembrane spans lie at 21 to 40, 55 to 74, 94 to 114, 121 to 141, 160 to 180, 189 to 209, 296 to 316, and 337 to 357; these read SLYYSLSDFSLSAISIFPTH, YSLESGLVCLYLYLIYRWIT, HGILLWLLSILFLGMTAFMFV, AFSDPPVKICLLAYSVHLFLL, VLLNLLLLPPIFHFYSYPFFF, YSPFLWFYFFITIVGNFIPLF, ILGMGVSSFMVSVCQFLSPIA, and WIVLLLTGPFLTSLFTQFYLF. Residues 296-580 form the ABC transmembrane type-1 1 domain; sequence ILGMGVSSFM…IAYLMRQIVQ (285 aa). N386 is a glycosylation site (N-linked (GlcNAc...) asparagine). 2 helical membrane-spanning segments follow: residues 412 to 432 and 441 to 461; these read EFIHIIVRAPVEIAGSIYLLQ and VGLALTVLTCSVPIVLGPLVA. N-linked (GlcNAc...) asparagine glycosylation is present at N510. 2 helical membrane-spanning segments follow: residues 524-544 and 553-573; these read VLVESLPVFSMFATFVVFTTI and IAFTSISLFSFIRTQFSWIAY. The 230-residue stretch at 611 to 840 folds into the ABC transporter 1 domain; that stretch reads IGFFNASLTW…LAEQAASASE (230 aa). N615 carries an N-linked (GlcNAc...) asparagine glycan. Residue 648-655 coordinates ATP; that stretch reads GPTGSGKS. 3 N-linked (GlcNAc...) asparagine glycosylation sites follow: N691, N790, and N815. A helical membrane pass occupies residues 894–914; that stretch reads GFYVAAVLLFFVTTQATSILI. The ABC transmembrane type-1 2 domain maps to 897-1176; the sequence is VAAVLLFFVT…FVRSCNSLQA (280 aa). N-linked (GlcNAc...) asparagine glycosylation occurs at N923. A helical membrane pass occupies residues 936-956; sequence FLFVYGTMLLAYSLLDFLRTV. N1007 carries an N-linked (GlcNAc...) asparagine glycan. 5 helical membrane passes run 1009-1029, 1033-1053, 1065-1085, 1120-1140, and 1148-1168; these read SGWLFFSINCFLSVAGGILSV, MPIFMIPAVIVCLAGYYFGLL, ISIYTSPIFSLLGESIVGVSV, VAVRTDGISGLVGAIAGLIAL, and GVVGFSLNQAVIFSSSVLLFV. Positions 1214 to 1453 constitute an ABC transporter 2 domain; sequence FNHVSVSYSA…NGHFRRMCDG (240 aa). Position 1246–1253 (1246–1253) interacts with ATP; it reads GRTGSGKS. Residue N1355 is glycosylated (N-linked (GlcNAc...) asparagine).

The protein belongs to the ABC transporter superfamily. ABCC family. Conjugate transporter (TC 3.A.1.208) subfamily.

The protein localises to the vacuole membrane. The catalysed reaction is ATP + H2O + xenobioticSide 1 = ADP + phosphate + xenobioticSide 2.. Involved in detoxification of xenobiotics, and vacuolar sequestration of glutathione S-conjugates. Together with abc2, required for accumulation of a red pigment (ade pigment) in the vacuole of a mutant affected in the adenine biosynthetic pathway. The protein is ATP-binding cassette transporter abc4 of Schizosaccharomyces pombe (strain 972 / ATCC 24843) (Fission yeast).